A 298-amino-acid polypeptide reads, in one-letter code: Glutamyl-Q tRNA(Asp) synthetase (298 aa).

Residues 12–16 (RFAPT) and Glu-48 each bind L-glutamate. Positions 15 to 25 (PTPSGYLHFGS) match the 'HIGH' region motif. Zn(2+) is bound by residues Cys-104, Cys-106, Tyr-118, and Cys-122. The L-glutamate site is built by Tyr-175 and Arg-193. Positions 231 to 235 (KLGKS) match the 'KMSKS' region motif. Lys-234 provides a ligand contact to ATP.

This sequence belongs to the class-I aminoacyl-tRNA synthetase family. GluQ subfamily. It depends on Zn(2+) as a cofactor.

In terms of biological role, catalyzes the tRNA-independent activation of glutamate in presence of ATP and the subsequent transfer of glutamate onto a tRNA(Asp). Glutamate is transferred on the 2-amino-5-(4,5-dihydroxy-2-cyclopenten-1-yl) moiety of the queuosine in the wobble position of the QUC anticodon. This is Glutamyl-Q tRNA(Asp) synthetase from Pseudomonas fluorescens (strain ATCC BAA-477 / NRRL B-23932 / Pf-5).